The primary structure comprises 246 residues: Short chain dehydrogenase/reductase dmxR12 (246 aa).

NADP(+)-binding residues include Ile-15, Ser-34, Lys-125, and Lys-164. Lys-164 acts as the Lowers pKa of active site Tyr in catalysis.

The protein belongs to the short-chain dehydrogenases/reductases (SDR) family.

It participates in secondary metabolite biosynthesis. Functionally, short chain dehydrogenase/reductase; part of the gene cluster that mediates the biosynthesis of the dimeric xanthones cryptosporioptides. The pathway begins with the synthesis of atrochrysone thioester by the polyketide synthase dmx-nrPKS. The atrochrysone carboxyl ACP thioesterase dmxR1 then breaks the thioester bond and releases the atrochrysone carboxylic acid from dmx-nrPKS. Atrochrysone carboxylic acid is decarboxylated by the decarboxylase dmxR15, and oxidized by the anthrone oxygenase dmxR16 to yield emodin. Emodin is then reduced to emodin hydroquinone by the oxidoreductase dmxR7. A-ring reduction by the short chain dehydrogenase dmxR18, dehydration by the scytalone dehydratase-like protein dmxR17 and probable spontaneous re-oxidation, results in overall deoxygenation to chrysophanol. Baeyer-Villiger oxidation by the Baeyer-Villiger monooxygenase (BVMO) dmxR6 then yields monodictylactone in equilibrium with monodictyphenone. In the case of the cryptosporioptides biosynthesis, monodictylactone is reduced at C-12 to an alcohol (by the short chain dehydrogenases dmxR12 or dmxR8) and hydroxylated at C-5 by dmxR9, yielding the electron-rich aromatic which could eliminate H(2)O to form the ortho-quinonemethide, followed by tautomerisation to paraquinone and complete the formal reduction to produce the 10-methylgroup. Conjugate addition of C-4a-OH to the resulting paraquinone by the monooxygenase dmxR10 then gives cyclohexadienone, which is then reduced at C-5 by the short chain dehydrogenase dmxR3 to give the dihydroxanthone. The 6,7-epoxide in the cryptosporioptides could be introduced by the cytochrome P450 monooxygenase dmxL3. The highly reducing PKS dmxL2 manufactures butyrate, which is further carboxylated by dmxL1 to form ethylmalonate. It is not yet clear whether the carboxylation occurs while the butyrate is attached to the ACP of dmxL2, but this unusual fungal metabolite could then be esterified to O-5 by the O-acetyltransferase dmxR13. Finally, dimerization performed by dmxR5 gives the observed dimers cryptosporioptides A, B and C as the final products of the pathway. The protein is Short chain dehydrogenase/reductase dmxR12 of Cryptosporiopsis sp. (strain 8999).